The sequence spans 360 residues: D-alanine--D-alanine ligase (360 aa).

Residues 146 to 352 enclose the ATP-grasp domain; that stretch reads KICAEHAGLH…FSQLIDRLLQ (207 aa). 179–234 contacts ATP; sequence LEEFTLPFFVKPASQGSSIGITKVHRPEELAAALEKAFMVDTKVLIEKTIEGREIE. The Mg(2+) site is built by D305, E319, and N321.

Belongs to the D-alanine--D-alanine ligase family. It depends on Mg(2+) as a cofactor. Requires Mn(2+) as cofactor.

It localises to the cytoplasm. It carries out the reaction 2 D-alanine + ATP = D-alanyl-D-alanine + ADP + phosphate + H(+). It functions in the pathway cell wall biogenesis; peptidoglycan biosynthesis. Its function is as follows. Cell wall formation. The protein is D-alanine--D-alanine ligase of Prosthecochloris aestuarii (strain DSM 271 / SK 413).